The chain runs to 530 residues: MDTRFHCVYLLTSLDPQCAGEYYIGYTVDPIRRLRQHNGEIVSGAWRTKRRGRPWELLCCVSGFGEDRIALKFEWCWQHPTKSTRLKTQMTQLRGVHRLPYAVGVLHLLLRADLFARLQLTLHIFEPEHVGRVVAELQGRVPSIPPLVATSLLRIEEITKERFMSLYLDGVSGGDGTAGDGCVYFVTAPLSSQPEADAPSRRVRSCRYLSEEDIFRQHARVKELLEANQCPCALCSLPLRSPYFVRCSRTPFCTLRAHLACLAMWFTYETMQKRDATMGQSTRNERSGEYSNKIKDDSNDGTMDAHASGRQLHSLSVNNADFSSSRDAGSILDSSGHISAFEESRCASSPSLTLLPSQPCPCPLCDEPLQWGALVHDLKRRAVLEKRWMERQRREKIEAALAERLQRLQNSSLTERKSRRKAKPALGQKRNRGEYCGDTVGDGGKEAITNWRARVMDGCDSWNDTNDFSHSVSLPPSGDEGYACDSSRRGVGGSKHTTRMTDEGKNDSITDICDCVLQLTEFNLDEWLDA.

The 86-residue stretch at 4 to 89 (RFHCVYLLTS…PTKSTRLKTQ (86 aa)) folds into the GIY-YIG domain. The segment at 232–365 (CALCSLPLRS…PSQPCPCPLC (134 aa)) adopts an SLX1-type zinc-finger fold. 3 disordered regions span residues 276-306 (ATMG…MDAH), 410-438 (NSSL…YCGD), and 474-502 (LPPS…RMTD). The span at 283-298 (RNERSGEYSNKIKDDS) shows a compositional bias: basic and acidic residues.

Belongs to the SLX1 family. Forms a heterodimer with a member of the SLX4 family. It depends on a divalent metal cation as a cofactor.

It localises to the nucleus. Catalytic subunit of a heterodimeric structure-specific endonuclease that resolves DNA secondary structures generated during DNA repair and recombination. Has endonuclease activity towards branched DNA substrates, introducing single-strand cuts in duplex DNA close to junctions with ss-DNA. This chain is Structure-specific endonuclease subunit SLX1 homolog 2, found in Trypanosoma cruzi (strain CL Brener).